The following is a 1091-amino-acid chain: ATP-citrate synthase (1091 aa).

Residues Lys4–Lys265 enclose the ATP-grasp domain. ATP is bound by residues Lys58, Arg66, Gly67, Pro109, Val111, and Glu118. Tyr131 is modified (phosphotyrosine). Asp216 is an ATP binding site. Residues Asp257, Ser260, and Ala262 each contribute to the Mg(2+) site. At Ser263 the chain carries Phosphoserine. Residues Gly309, Asn346, Thr348, Tyr364, and Arg379 each coordinate citrate. Residues Ser442–Ser457 are compositionally biased toward low complexity. The disordered stretch occupies residues Ser442–Lys471. Thr447 is modified (phosphothreonine). A Phosphoserine modification is found at Ser451. Ser455 is modified (phosphoserine; by PKA and PKB/AKT1 or PKB/AKT2 or BCKDK). Position 459 is a phosphoserine (Ser459). 3 positions are modified to N6-acetyllysine; alternate: Lys530, Lys536, and Lys544. Glycyl lysine isopeptide (Lys-Gly) (interchain with G-Cter in ubiquitin); alternate cross-links involve residues Lys530, Lys536, and Lys544. At Thr629 the chain carries Phosphothreonine. Residue Ser653 is modified to Phosphoserine. Residue Tyr672 is modified to Phosphotyrosine. His750 acts as the Tele-phosphohistidine intermediate in catalysis. CoA is bound at residue Leu769–Ser779. Ser829 bears the Phosphoserine mark. N6-acetyllysine is present on residues Lys938, Lys958, Lys968, and Lys1067. At Ser1090 the chain carries Phosphoserine.

This sequence in the N-terminal section; belongs to the succinate/malate CoA ligase beta subunit family. The protein in the C-terminal section; belongs to the succinate/malate CoA ligase alpha subunit family. In terms of assembly, homotetramer. The cofactor is Mg(2+). Post-translationally, phosphorylated by PKA and GSK3 in a sequential manner; phosphorylation results in activation of its activity. Phosphorylation on Thr-447 and Ser-451 depends on the phosphorylation state of Ser-455. Phosphorylation on Ser-455 is decreased by prior phosphorylation on the other 2 residues. Phosphorylated at Ser-455 by BCKDK and dephosphorylated by protein phosphatase PPM1K. ISGylated. In terms of processing, acetylated at Lys-530, Lys-536 and Lys-544 by KAT2B/PCAF. Acetylation is promoted by glucose and stabilizes the protein, probably by preventing ubiquitination at the same sites. Acetylation promotes de novo lipid synthesis. Deacetylated by SIRT2. Post-translationally, ubiquitinated at Lys-530, Lys-536 and Lys-544 by the BCR(KLHL25) E3 ubiquitin ligase complex and UBR4, leading to its degradation. Ubiquitination is probably inhibited by acetylation at same site. BCR(KLHL25)-mediated degradation of ACLY promotes fatty acid oxidation and is required for differentiation of inducible regulatory T (iTreg) cells.

The protein resides in the cytoplasm. It is found in the cytosol. The catalysed reaction is oxaloacetate + acetyl-CoA + ADP + phosphate = citrate + ATP + CoA. Phosphorylation results in activation of its activity. Glucose 6-phosphate, fructose 6-phosphate, fructose 2,6-bisphosphate, ribulose 5-phosphate, and fructose 1,6-bisphosphate also act as activators. Its function is as follows. Catalyzes the cleavage of citrate into oxaloacetate and acetyl-CoA, the latter serving as common substrate in multiple biochemical reactions in protein, carbohydrate and lipid metabolism. In Bos taurus (Bovine), this protein is ATP-citrate synthase (ACLY).